A 150-amino-acid polypeptide reads, in one-letter code: Ribonuclease pancreatic delta-type (150 aa).

Residues 1 to 25 (MGLEKSFILFSLLVLVLGWVQPSLG) form the signal peptide. Residue R35 participates in substrate binding. H37 serves as the catalytic Proton acceptor. 4 cysteine pairs are disulfide-bonded: C51–C110, C65–C121, C83–C136, and C90–C98. Substrate contacts are provided by residues 66–70 (KRVNT), K91, and R111. The Proton donor role is filled by H145.

Belongs to the pancreatic ribonuclease family. Monomer.

The protein resides in the secreted. It carries out the reaction an [RNA] containing cytidine + H2O = an [RNA]-3'-cytidine-3'-phosphate + a 5'-hydroxy-ribonucleotide-3'-[RNA].. It catalyses the reaction an [RNA] containing uridine + H2O = an [RNA]-3'-uridine-3'-phosphate + a 5'-hydroxy-ribonucleotide-3'-[RNA].. Endonuclease that catalyzes the cleavage of RNA on the 3' side of pyrimidine nucleotides. Acts on single-stranded and double-stranded RNA. The polypeptide is Ribonuclease pancreatic delta-type (Rnase1d) (Rattus norvegicus (Rat)).